The following is a 245-amino-acid chain: Putative binding protein HI_1525 (245 aa).

The first 19 residues, 1-19, serve as a signal peptide directing secretion; the sequence is MKKLVAVTSMILTTFSVQA. Residues Ser56 and Val163 each contribute to the molybdate site.

This sequence belongs to the bacterial solute-binding protein ModA family.

The protein localises to the periplasm. Its function is as follows. Probably involved in the binding-dependent system. The polypeptide is Putative binding protein HI_1525 (Haemophilus influenzae (strain ATCC 51907 / DSM 11121 / KW20 / Rd)).